A 63-amino-acid polypeptide reads, in one-letter code: Small integral membrane protein 43 (63 aa).

2 important for interaction with SLC2A1 and SLC2A3 regions span residues 7–29 and 51–57; these read LLLY…FVVI and HREPWGF. The chain crosses the membrane as a helical span at residues 9–29; that stretch reads LYLALFFFLLFLLFLLLFVVI.

In terms of assembly, interacts with glucose transporters SLC2A1/GLUT1 and SLC2A3/GLUT3; the interactions may promote SLC2A1- and SLC2A3-mediated glucose transport to meet the energy needs of mesendoderm differentiation. As to expression, accumulates in the posterior primitive streak of mid-gastrulation embryos at 7.0 dpc. In the adult, highly abundant and enriched in the brain compared to other organs.

It is found in the cell membrane. In terms of biological role, required for mesendoderm differentiation. Interacts with glucose transporters and promotes glucose uptake. Probably augments the glucose uptake capacity of glucose transporter proteins to meet the energy needs of mesendoderm differentiation. The chain is Small integral membrane protein 43 from Mus musculus (Mouse).